The primary structure comprises 277 residues: Shikimate dehydrogenase (NADP(+)) (277 aa).

Shikimate is bound by residues S15 to S17 and T62. K66 serves as the catalytic Proton acceptor. Residues N87 and D102 each coordinate shikimate. NADP(+) is bound by residues G127–A131, N151–K156, and I219. Y221 contacts shikimate. G242 is an NADP(+) binding site.

The protein belongs to the shikimate dehydrogenase family. Homodimer.

The catalysed reaction is shikimate + NADP(+) = 3-dehydroshikimate + NADPH + H(+). The protein operates within metabolic intermediate biosynthesis; chorismate biosynthesis; chorismate from D-erythrose 4-phosphate and phosphoenolpyruvate: step 4/7. Its function is as follows. Involved in the biosynthesis of the chorismate, which leads to the biosynthesis of aromatic amino acids. Catalyzes the reversible NADPH linked reduction of 3-dehydroshikimate (DHSA) to yield shikimate (SA). The sequence is that of Shikimate dehydrogenase (NADP(+)) from Bacillus anthracis (strain CDC 684 / NRRL 3495).